Reading from the N-terminus, the 185-residue chain is ATP synthase subunit delta (185 aa).

It belongs to the ATPase delta chain family. F-type ATPases have 2 components, F(1) - the catalytic core - and F(0) - the membrane proton channel. F(1) has five subunits: alpha(3), beta(3), gamma(1), delta(1), epsilon(1). F(0) has three main subunits: a(1), b(2) and c(10-14). The alpha and beta chains form an alternating ring which encloses part of the gamma chain. F(1) is attached to F(0) by a central stalk formed by the gamma and epsilon chains, while a peripheral stalk is formed by the delta and b chains.

The protein resides in the cell inner membrane. Its function is as follows. F(1)F(0) ATP synthase produces ATP from ADP in the presence of a proton or sodium gradient. F-type ATPases consist of two structural domains, F(1) containing the extramembraneous catalytic core and F(0) containing the membrane proton channel, linked together by a central stalk and a peripheral stalk. During catalysis, ATP synthesis in the catalytic domain of F(1) is coupled via a rotary mechanism of the central stalk subunits to proton translocation. In terms of biological role, this protein is part of the stalk that links CF(0) to CF(1). It either transmits conformational changes from CF(0) to CF(1) or is implicated in proton conduction. The chain is ATP synthase subunit delta from Coxiella burnetii (strain CbuK_Q154) (Coxiella burnetii (strain Q154)).